A 266-amino-acid chain; its full sequence is MVVILAIVEGITEFLPISSTGHMILVNKLIGGEYLSPTFRNSFLIIIQLGAIFSVVVYFWKDISPFVKTKKEFVLKFRLWLKIIVGVLPAMVIGLLLDDIIDKYFLDNVLIVAITLIAYGVIFIGIEVVYKLKNIKPKVKRFAGLKYRTAFLIGFFQCLAMIPGTSRSGATIIGALLLGLSRPLAAEFSFYLAIPTMFGATALKLFKNGLAFTEMEWSYLALGSAIAFVVAYIVIKWFMDFIKKRSFASFGLYRIILGIIVIVLLY.

The next 8 helical transmembrane spans lie at 1–21 (MVVILAIVEGITEFLPISSTG), 43–63 (FLIIIQLGAIFSVVVYFWKDI), 81–101 (LKIIVGVLPAMVIGLLLDDII), 109–129 (VLIVAITLIAYGVIFIGIEVV), 159–179 (LAMIPGTSRSGATIIGALLLG), 183–203 (PLAAEFSFYLAIPTMFGATAL), 219–239 (YLALGSAIAFVVAYIVIKWFM), and 246–266 (SFASFGLYRIILGIIVIVLLY).

This sequence belongs to the UppP family.

The protein resides in the cell inner membrane. It carries out the reaction di-trans,octa-cis-undecaprenyl diphosphate + H2O = di-trans,octa-cis-undecaprenyl phosphate + phosphate + H(+). In terms of biological role, catalyzes the dephosphorylation of undecaprenyl diphosphate (UPP). Confers resistance to bacitracin. The chain is Undecaprenyl-diphosphatase from Fusobacterium nucleatum subsp. nucleatum (strain ATCC 25586 / DSM 15643 / BCRC 10681 / CIP 101130 / JCM 8532 / KCTC 2640 / LMG 13131 / VPI 4355).